A 430-amino-acid polypeptide reads, in one-letter code: Trigger factor (430 aa).

A PPIase FKBP-type domain is found at 157–242; that stretch reads GDLVALETWS…AVEVSEPVLP (86 aa).

The protein belongs to the FKBP-type PPIase family. Tig subfamily.

It localises to the cytoplasm. The catalysed reaction is [protein]-peptidylproline (omega=180) = [protein]-peptidylproline (omega=0). In terms of biological role, involved in protein export. Acts as a chaperone by maintaining the newly synthesized protein in an open conformation. Functions as a peptidyl-prolyl cis-trans isomerase. The sequence is that of Trigger factor from Xanthomonas axonopodis pv. citri (strain 306).